Consider the following 156-residue polypeptide: Small ribosomal subunit protein uS7 (156 aa).

This sequence belongs to the universal ribosomal protein uS7 family. Part of the 30S ribosomal subunit. Contacts proteins S9 and S11.

Its function is as follows. One of the primary rRNA binding proteins, it binds directly to 16S rRNA where it nucleates assembly of the head domain of the 30S subunit. Is located at the subunit interface close to the decoding center, probably blocks exit of the E-site tRNA. In Paracoccus denitrificans (strain Pd 1222), this protein is Small ribosomal subunit protein uS7.